The chain runs to 397 residues: Protein Rep52 (397 aa).

The SF3 helicase domain occupies D84 to K239. An ATP-binding site is contributed by G110–T117. The segment at G265–A296 is disordered.

In terms of assembly, homooligomer. Interacts with host PRKX.

The protein resides in the host nucleus. In terms of biological role, plays a critical role during packaging of viral DNA into empty capsids, where they are thought to be part of the packaging motor complex. The single stranded genomic DNA is packaged in a 3' to 5' direction and requires the association between viral DNA and Rep40. Regulates host PKA activity by interacting with host PRKX as a mechanism to interfere with helper virus propagation and to promote its own replication. In Mammalia (AAV-2), this protein is Protein Rep52 (Rep52).